The chain runs to 311 residues: Acetyl-coenzyme A carboxylase carboxyl transferase subunit alpha (311 aa).

The region spanning E32–Q289 is the CoA carboxyltransferase C-terminal domain.

The protein belongs to the AccA family. Acetyl-CoA carboxylase is a heterohexamer composed of biotin carboxyl carrier protein (AccB), biotin carboxylase (AccC) and two subunits each of ACCase subunit alpha (AccA) and ACCase subunit beta (AccD).

It localises to the cytoplasm. The catalysed reaction is N(6)-carboxybiotinyl-L-lysyl-[protein] + acetyl-CoA = N(6)-biotinyl-L-lysyl-[protein] + malonyl-CoA. The protein operates within lipid metabolism; malonyl-CoA biosynthesis; malonyl-CoA from acetyl-CoA: step 1/1. In terms of biological role, component of the acetyl coenzyme A carboxylase (ACC) complex. First, biotin carboxylase catalyzes the carboxylation of biotin on its carrier protein (BCCP) and then the CO(2) group is transferred by the carboxyltransferase to acetyl-CoA to form malonyl-CoA. This is Acetyl-coenzyme A carboxylase carboxyl transferase subunit alpha from Exiguobacterium sibiricum (strain DSM 17290 / CCUG 55495 / CIP 109462 / JCM 13490 / 255-15).